Consider the following 454-residue polypeptide: uncharacterized protein (454 aa).

The N-terminal stretch at 1 to 21 (MKYKTVKSIPLFLLGSIVFTA) is a signal peptide. A lipid anchor (N-palmitoyl cysteine) is attached at Cys22. Residue Cys22 is the site of S-diacylglycerol cysteine attachment. The segment covering 55–64 (ASSSSSTTTS) has biased composition (low complexity). The interval 55–87 (ASSSSSTTTSNDDNNQKGYFLETNRSTGTYDPN) is disordered. Residues 65 to 87 (NDDNNQKGYFLETNRSTGTYDPN) show a composition bias toward polar residues.

The protein localises to the cell membrane. This is an uncharacterized protein from Mycoplasma pneumoniae (strain ATCC 29342 / M129 / Subtype 1) (Mycoplasmoides pneumoniae).